The primary structure comprises 866 residues: Scm-like with four MBT domains protein 1 (866 aa).

4 MBT repeats span residues 20–120 (LSWE…LEAP), 128–232 (SDWD…LQPP), 242–348 (AEWQ…ISPP), and 356–453 (FDWA…LSTP). The interval 34-42 (VPYGSFKHV) is antigenic epitope. Positions 641-777 (KKKNKRIGRP…DDENKPPSPK (137 aa)) are disordered. Residues 663–682 (KASKRRKRRKNVFVHKKKRS) are compositionally biased toward basic residues. Residues 683-694 (SASVDNTPAGSP) are compositionally biased toward polar residues. Acidic residues-rich tracts occupy residues 699-713 (GEDE…DDSL) and 721-730 (QQDELQEESE). The segment covering 737–749 (CSSSPTQSEISTS) has biased composition (low complexity). 2 positions are modified to phosphoserine: S767 and S775. Residues 796 to 864 (WSVADVVRFI…RIKFAFYEQF (69 aa)) enclose the SAM domain.

Interacts with MYOD1. Component of the SLC (SFMBT1-LSD1-CoREST) corepressor complex, which also contains KDM1A/LSD1 and RCOR1/CoREST. Interacts with KDM1A/LSD1 and RCOR1/CoREST. Interacts with L3MBTL3. In terms of tissue distribution, expressed in all cell lines and normal tissues tested, including the thymus.

It localises to the nucleus. Functionally, histone-binding protein, which is part of various corepressor complexes. Mediates the recruitment of corepressor complexes to target genes, followed by chromatin compaction and repression of transcription. Plays a role during myogenesis: required for the maintenance of undifferentiated states of myogenic progenitor cells via interaction with MYOD1. Interaction with MYOD1 leads to the recruitment of associated corepressors and silencing of MYOD1 target genes. Part of the SLC complex in germ cells, where it may play a role during spermatogenesis. This Homo sapiens (Human) protein is Scm-like with four MBT domains protein 1 (SFMBT1).